Consider the following 345-residue polypeptide: Methionine import ATP-binding protein MetN (345 aa).

Residues 2–241 (IKLNNIXKIF…PKTELAQEFI (240 aa)) enclose the ABC transporter domain. 38 to 45 (GASGAGKS) contacts ATP.

The protein belongs to the ABC transporter superfamily. Methionine importer (TC 3.A.1.24) family. The complex is composed of two ATP-binding proteins (MetN), two transmembrane proteins (MetI) and a solute-binding protein (MetQ).

It localises to the cell inner membrane. It carries out the reaction L-methionine(out) + ATP + H2O = L-methionine(in) + ADP + phosphate + H(+). The enzyme catalyses D-methionine(out) + ATP + H2O = D-methionine(in) + ADP + phosphate + H(+). In terms of biological role, part of the ABC transporter complex MetNIQ involved in methionine import. Responsible for energy coupling to the transport system. This chain is Methionine import ATP-binding protein MetN, found in Haemophilus influenzae (strain ATCC 51907 / DSM 11121 / KW20 / Rd).